The sequence spans 391 residues: Phosphoglycerate kinase (391 aa).

Substrate is bound by residues 21 to 23, Arg36, 59 to 62, Arg113, and Arg146; these read DLN and HLGR. Residues Lys197, Glu319, and 345 to 348 contribute to the ATP site; that span reads GGDT.

Belongs to the phosphoglycerate kinase family. Monomer.

It is found in the cytoplasm. The catalysed reaction is (2R)-3-phosphoglycerate + ATP = (2R)-3-phospho-glyceroyl phosphate + ADP. Its pathway is carbohydrate degradation; glycolysis; pyruvate from D-glyceraldehyde 3-phosphate: step 2/5. The protein is Phosphoglycerate kinase of Xylella fastidiosa (strain Temecula1 / ATCC 700964).